We begin with the raw amino-acid sequence, 445 residues long: Tubulin beta-4 chain (445 aa).

Residues 1-4 (MREI) carry the MREI motif motif. GTP contacts are provided by Gln11, Glu69, Ser138, Gly142, Thr143, Gly144, Asn204, and Asn226. Glu69 provides a ligand contact to Mg(2+). Residues 425 to 445 (YQDATAEEEGEFEEGEEEENA) form a disordered region. Residues 429–445 (TAEEEGEFEEGEEEENA) show a composition bias toward acidic residues. Glu438 carries the 5-glutamyl polyglutamate modification.

It belongs to the tubulin family. Dimer of alpha and beta chains. A typical microtubule is a hollow water-filled tube with an outer diameter of 25 nm and an inner diameter of 15 nM. Alpha-beta heterodimers associate head-to-tail to form protofilaments running lengthwise along the microtubule wall with the beta-tubulin subunit facing the microtubule plus end conferring a structural polarity. Microtubules usually have 13 protofilaments but different protofilament numbers can be found in some organisms and specialized cells. Mg(2+) serves as cofactor. In terms of processing, some glutamate residues at the C-terminus are polyglycylated, resulting in polyglycine chains on the gamma-carboxyl group. Glycylation is mainly limited to tubulin incorporated into axonemes (cilia and flagella) whereas glutamylation is prevalent in neuronal cells, centrioles, axonemes, and the mitotic spindle. Both modifications can coexist on the same protein on adjacent residues, and lowering polyglycylation levels increases polyglutamylation, and reciprocally. The precise function of polyglycylation is still unclear. Some glutamate residues at the C-terminus are polyglutamylated, resulting in polyglutamate chains on the gamma-carboxyl group. Polyglutamylation plays a key role in microtubule severing by spastin (SPAST). SPAST preferentially recognizes and acts on microtubules decorated with short polyglutamate tails: severing activity by SPAST increases as the number of glutamates per tubulin rises from one to eight, but decreases beyond this glutamylation threshold. As to expression, preferential expression in germ cells.

It localises to the cytoplasm. Its subcellular location is the cytoskeleton. Its function is as follows. Tubulin is the major constituent of microtubules, a cylinder consisting of laterally associated linear protofilaments composed of alpha- and beta-tubulin heterodimers. Microtubules grow by the addition of GTP-tubulin dimers to the microtubule end, where a stabilizing cap forms. Below the cap, tubulin dimers are in GDP-bound state, owing to GTPase activity of alpha-tubulin. The polypeptide is Tubulin beta-4 chain (tubb4) (Xenopus laevis (African clawed frog)).